The chain runs to 144 residues: SVVKSEDFSLSAYVDRRDHPLPEVAHVKHLSASQKALKEKEKASWSSLSMDEKVELYRIKFKESFAEMNRGSNEWKTVVGGAMFFIGFTALIIMWQKRHVYGPLPQSFDKEWVAKQTKRMLDMKVNPIQGLASKWDYEKNEWKK.

Residues 1–73 are Mitochondrial matrix-facing; it reads SVVKSEDFSL…SFAEMNRGSN (73 aa). Lys4 bears the N6-acetyllysine; alternate mark. Lys4 carries the post-translational modification N6-succinyllysine; alternate. At Lys28 the chain carries N6-acetyllysine. Residues Ser31 and Ser33 each carry the phosphoserine modification. Residue Lys35 is modified to N6-acetyllysine; alternate. Lys35 is subject to N6-succinyllysine; alternate. Residue Lys42 is modified to N6-acetyllysine. Residues 74 to 99 traverse the membrane as a helical segment; the sequence is EWKTVVGGAMFFIGFTALIIMWQKRH. The Mitochondrial intermembrane portion of the chain corresponds to 100 to 144; the sequence is VYGPLPQSFDKEWVAKQTKRMLDMKVNPIQGLASKWDYEKNEWKK.

It belongs to the cytochrome c oxidase IV family. Component of the cytochrome c oxidase (complex IV, CIV), a multisubunit enzyme composed of 14 subunits. The complex is composed of a catalytic core of 3 subunits MT-CO1, MT-CO2 and MT-CO3, encoded in the mitochondrial DNA, and 11 supernumerary subunits COX4I, COX5A, COX5B, COX6A, COX6B, COX6C, COX7A, COX7B, COX7C, COX8 and NDUFA4, which are encoded in the nuclear genome. The complex exists as a monomer or a dimer and forms supercomplexes (SCs) in the inner mitochondrial membrane with NADH-ubiquinone oxidoreductase (complex I, CI) and ubiquinol-cytochrome c oxidoreductase (cytochrome b-c1 complex, complex III, CIII), resulting in different assemblies (supercomplex SCI(1)III(2)IV(1) and megacomplex MCI(2)III(2)IV(2)). Interacts with PHB2; the interaction decreases in absence of SPHK2. Interacts with AFG1L. Interacts with ABCB7; this interaction allows the regulation of cellular iron homeostasis and cellular reactive oxygen species (ROS) levels in cardiomyocytes. Interacts with FLVCR2; this interaction occurs in the absence of heme and is disrupted upon heme binding. Interacts with IRGC.

The protein resides in the mitochondrion inner membrane. It participates in energy metabolism; oxidative phosphorylation. Functionally, component of the cytochrome c oxidase, the last enzyme in the mitochondrial electron transport chain which drives oxidative phosphorylation. The respiratory chain contains 3 multisubunit complexes succinate dehydrogenase (complex II, CII), ubiquinol-cytochrome c oxidoreductase (cytochrome b-c1 complex, complex III, CIII) and cytochrome c oxidase (complex IV, CIV), that cooperate to transfer electrons derived from NADH and succinate to molecular oxygen, creating an electrochemical gradient over the inner membrane that drives transmembrane transport and the ATP synthase. Cytochrome c oxidase is the component of the respiratory chain that catalyzes the reduction of oxygen to water. Electrons originating from reduced cytochrome c in the intermembrane space (IMS) are transferred via the dinuclear copper A center (CU(A)) of subunit 2 and heme A of subunit 1 to the active site in subunit 1, a binuclear center (BNC) formed by heme A3 and copper B (CU(B)). The BNC reduces molecular oxygen to 2 water molecules using 4 electrons from cytochrome c in the IMS and 4 protons from the mitochondrial matrix. This is Cytochrome c oxidase subunit 4 isoform 1, mitochondrial (COX4I1) from Pongo pygmaeus (Bornean orangutan).